We begin with the raw amino-acid sequence, 272 residues long: Urease accessory protein UreD (272 aa).

Belongs to the UreD family. As to quaternary structure, ureD, UreF and UreG form a complex that acts as a GTP-hydrolysis-dependent molecular chaperone, activating the urease apoprotein by helping to assemble the nickel containing metallocenter of UreC. The UreE protein probably delivers the nickel.

It is found in the cytoplasm. Functionally, required for maturation of urease via the functional incorporation of the urease nickel metallocenter. The sequence is that of Urease accessory protein UreD from Opitutus terrae (strain DSM 11246 / JCM 15787 / PB90-1).